The primary structure comprises 531 residues: RCC1 and BTB domain-containing protein 1 (531 aa).

6 RCC1 repeats span residues 40–91 (NDEV…LLST), 93–145 (DGVV…ALAA), 147–198 (GEVF…AVLD), 199–250 (NGEV…ALTD), 252–302 (GLLY…AAKT), and 304–356 (GGHV…FLTV). BTB domains follow at residues 370–437 (ADLK…DLPP) and 470–499 (ENAF…INHL).

Ubiquitously expressed. In the retina, present in the nerve fiber layer and to a lesser extent in the inner and outer plexiform layers (at protein level).

The protein resides in the nucleus. Its function is as follows. May be involved in cell cycle regulation by chromatin remodeling. The protein is RCC1 and BTB domain-containing protein 1 (RCBTB1) of Homo sapiens (Human).